A 968-amino-acid chain; its full sequence is Phosphatidylserine decarboxylase 2 proenzyme (968 aa).

Positions Met1 to Ser25 are cleaved as a signal peptide. Residues Asp500, His570, and Ser683 each act as charge relay system; for autoendoproteolytic cleavage activity in the active site. Ser683 (schiff-base intermediate with substrate; via pyruvic acid; for decarboxylase activity) is an active-site residue. At Ser683 the chain carries Pyruvic acid (Ser); by autocatalysis.

It belongs to the phosphatidylserine decarboxylase family. As to quaternary structure, heterodimer of a large membrane-associated beta subunit and a small pyruvoyl-containing alpha subunit. Pyruvate serves as cofactor. Post-translationally, is synthesized initially as an inactive proenzyme. Formation of the active enzyme involves a self-maturation process in which the active site pyruvoyl group is generated from an internal serine residue via an autocatalytic post-translational modification. Two non-identical subunits are generated from the proenzyme in this reaction, and the pyruvate is formed at the N-terminus of the alpha chain, which is derived from the carboxyl end of the proenzyme. The autoendoproteolytic cleavage occurs by a canonical serine protease mechanism, in which the side chain hydroxyl group of the serine supplies its oxygen atom to form the C-terminus of the beta chain, while the remainder of the serine residue undergoes an oxidative deamination to produce ammonia and the pyruvoyl prosthetic group on the alpha chain. During this reaction, the Ser that is part of the protease active site of the proenzyme becomes the pyruvoyl prosthetic group, which constitutes an essential element of the active site of the mature decarboxylase.

It is found in the parasitophorous vacuole. The protein resides in the cytoplasmic vesicle. It localises to the secretory vesicle. The catalysed reaction is a 1,2-diacyl-sn-glycero-3-phospho-L-serine + H(+) = a 1,2-diacyl-sn-glycero-3-phosphoethanolamine + CO2. It functions in the pathway phospholipid metabolism; phosphatidylethanolamine biosynthesis; phosphatidylethanolamine from CDP-diacylglycerol: step 2/2. Catalyzes the formation of phosphatidylethanolamine (PtdEtn) from phosphatidylserine (PtdSer). Plays a central role in phospholipid metabolism and in the interorganelle trafficking of phosphatidylserine. Can act on liposomal and host cell PtdSer. The polypeptide is Phosphatidylserine decarboxylase 2 proenzyme (Toxoplasma gondii (strain ATCC 50853 / GT1)).